The sequence spans 635 residues: Surface protein F (635 aa).

Residues 1–37 (MAKYRGKPFQLYVKLSCSTMMATSIILTNILPYDAQA) form the signal peptide. Basic and acidic residues-rich tracts occupy residues 101–112 (NELDSKDNKSSH) and 193–202 (KSKDASKDTS). Disordered stretches follow at residues 101-122 (NELD…SDID) and 192-228 (HKSK…SGHV). An LPXTG sorting signal motif is present at residues 597–601 (LPKAG). Ala600 is subject to Pentaglycyl murein peptidoglycan amidated alanine. A propeptide spans 601 to 635 (GETIKEHWLPISVIVGAMGVLMIWLSRRNKLKNKA) (removed by sortase).

It localises to the secreted. The protein localises to the cell wall. This is Surface protein F from Staphylococcus aureus (strain NCTC 8325 / PS 47).